Consider the following 275-residue polypeptide: uncharacterized protein (275 aa).

This sequence belongs to the MtfA family.

This is an uncharacterized protein from Synechocystis sp. (strain ATCC 27184 / PCC 6803 / Kazusa).